We begin with the raw amino-acid sequence, 309 residues long: 5-formyl-3-hydroxy-2-methylpyridine 4-carboxylate 5-dehydrogenase (309 aa).

NAD(+) is bound by residues 12–13, Asp-32, 87–89, and Lys-94; these read TM and VPE.

This sequence belongs to the 3-hydroxyacyl-CoA dehydrogenase family. Homodimer.

It carries out the reaction 5-formyl-3-hydroxy-2-methylpyridine-4-carboxylate + NAD(+) + H2O = 5-hydroxy-6-methylpyridine-3,4-dicarboxylate + NADH + 2 H(+). It catalyses the reaction 5-formyl-3-hydroxy-2-methylpyridine-4-carboxylate + NADH + H(+) = 4-pyridoxate + NAD(+). The protein operates within cofactor degradation; B6 vitamer degradation. In terms of biological role, involved in the degradation of pyridoxine (vitamin B(6)). Catalyzes the oxidation of 5-formyl-3-hydroxy-2-methylpyridine-4-carboxylate (FHMPC) by NAD(+) to 5-hydroxy-6-methylpyridine-3,4-dicarboxylate (HMPDC). Can also catalyze the reduction of FHMPC by NADH to 4-pyridoxic acid. The chain is 5-formyl-3-hydroxy-2-methylpyridine 4-carboxylate 5-dehydrogenase from Mesorhizobium japonicum (strain LMG 29417 / CECT 9101 / MAFF 303099) (Mesorhizobium loti (strain MAFF 303099)).